A 445-amino-acid chain; its full sequence is tRNA-2-methylthio-N(6)-dimethylallyladenosine synthase (445 aa).

Positions 3-124 (KKLYIKTYGC…LPELISKVVR (122 aa)) constitute an MTTase N-terminal domain. Residues cysteine 12, cysteine 48, cysteine 87, cysteine 162, cysteine 166, and cysteine 169 each contribute to the [4Fe-4S] cluster site. Residues 148 to 380 (YPQGTSAFIS…QQELMAQQLA (233 aa)) form the Radical SAM core domain. The 63-residue stretch at 383-445 (TSCVGSTMKV…SLNSLTGEIL (63 aa)) folds into the TRAM domain.

It belongs to the methylthiotransferase family. MiaB subfamily. Monomer. Requires [4Fe-4S] cluster as cofactor.

The protein resides in the cytoplasm. It catalyses the reaction N(6)-dimethylallyladenosine(37) in tRNA + (sulfur carrier)-SH + AH2 + 2 S-adenosyl-L-methionine = 2-methylsulfanyl-N(6)-dimethylallyladenosine(37) in tRNA + (sulfur carrier)-H + 5'-deoxyadenosine + L-methionine + A + S-adenosyl-L-homocysteine + 2 H(+). Catalyzes the methylthiolation of N6-(dimethylallyl)adenosine (i(6)A), leading to the formation of 2-methylthio-N6-(dimethylallyl)adenosine (ms(2)i(6)A) at position 37 in tRNAs that read codons beginning with uridine. The protein is tRNA-2-methylthio-N(6)-dimethylallyladenosine synthase of Rickettsia rickettsii (strain Iowa).